The sequence spans 151 residues: Large ribosomal subunit protein bL9 (151 aa).

This sequence belongs to the bacterial ribosomal protein bL9 family.

In terms of biological role, binds to the 23S rRNA. In Nitrosococcus oceani (strain ATCC 19707 / BCRC 17464 / JCM 30415 / NCIMB 11848 / C-107), this protein is Large ribosomal subunit protein bL9.